Consider the following 88-residue polypeptide: Phosphocarrier protein HPr (88 aa).

The HPr domain occupies 1–88 (MKKIQVVVKD…KAVLEKHQVI (88 aa)). Catalysis depends on H15, which acts as the Pros-phosphohistidine intermediate. S47 carries the phosphoserine; by HPrK/P modification.

Belongs to the HPr family.

The protein resides in the cytoplasm. With respect to regulation, phosphorylation on Ser-47 inhibits the phosphoryl transfer from enzyme I to HPr. Its function is as follows. General (non sugar-specific) component of the phosphoenolpyruvate-dependent sugar phosphotransferase system (sugar PTS). This major carbohydrate active-transport system catalyzes the phosphorylation of incoming sugar substrates concomitantly with their translocation across the cell membrane. The phosphoryl group from phosphoenolpyruvate (PEP) is transferred to the phosphoryl carrier protein HPr by enzyme I. Phospho-HPr then transfers it to the PTS EIIA domain. P-Ser-HPr interacts with the catabolite control protein A (CcpA), forming a complex that binds to DNA at the catabolite response elements cre, operator sites preceding a large number of catabolite-regulated genes. Thus, P-Ser-HPr is a corepressor in carbon catabolite repression (CCR), a mechanism that allows bacteria to coordinate and optimize the utilization of available carbon sources. P-Ser-HPr also plays a role in inducer exclusion, in which it probably interacts with several non-PTS permeases and inhibits their transport activity. This is Phosphocarrier protein HPr (ptsH) from Mycoplasma pneumoniae (strain ATCC 29342 / M129 / Subtype 1) (Mycoplasmoides pneumoniae).